The sequence spans 187 residues: MKTQKLLQGINIYLIGMMGSGKSTIGKILAQRLDYRFFDTDILIERVTQQSINDIFVTQGETVFRDIETQVLSEVAACTRSVIATGGGIVLNSQNWSYLHHGLIIWLDVSIKLLKTRLINDTTRPLLKESDLTLKLKTLDEQRRNLYNKADLTIVINQNRTPESIVSEILEAIPTVIKPKVEANQFN.

ATP is bound at residue glycine 19–threonine 24. Residue serine 23 coordinates Mg(2+). Substrate contacts are provided by aspartate 41, arginine 65, and glycine 87. Residue arginine 124 coordinates ATP. A substrate-binding site is contributed by arginine 143. Arginine 160 is a binding site for ATP.

The protein belongs to the shikimate kinase family. Monomer. Mg(2+) serves as cofactor.

The protein localises to the cytoplasm. It carries out the reaction shikimate + ATP = 3-phosphoshikimate + ADP + H(+). The protein operates within metabolic intermediate biosynthesis; chorismate biosynthesis; chorismate from D-erythrose 4-phosphate and phosphoenolpyruvate: step 5/7. Functionally, catalyzes the specific phosphorylation of the 3-hydroxyl group of shikimic acid using ATP as a cosubstrate. The sequence is that of Shikimate kinase from Rippkaea orientalis (strain PCC 8801 / RF-1) (Cyanothece sp. (strain PCC 8801)).